We begin with the raw amino-acid sequence, 447 residues long: Argininosuccinate synthase (447 aa).

Residues 17 to 25 (AFSGGLDTS) and Ala43 each bind ATP. Tyr99 contributes to the L-citrulline binding site. ATP is bound by residues Gly129 and Thr131. L-aspartate contacts are provided by Thr131, Asn135, and Asp136. Residue Asn135 coordinates L-citrulline. Residue Asp136 participates in ATP binding. Arg139 and Ser192 together coordinate L-citrulline. Position 194 (Asp194) interacts with ATP. 3 residues coordinate L-citrulline: Thr201, Glu203, and Glu280.

The protein belongs to the argininosuccinate synthase family. Type 2 subfamily. In terms of assembly, homotetramer.

It localises to the cytoplasm. It carries out the reaction L-citrulline + L-aspartate + ATP = 2-(N(omega)-L-arginino)succinate + AMP + diphosphate + H(+). It functions in the pathway amino-acid biosynthesis; L-arginine biosynthesis; L-arginine from L-ornithine and carbamoyl phosphate: step 2/3. In Salmonella typhi, this protein is Argininosuccinate synthase (argG).